The sequence spans 245 residues: 1-(5-phosphoribosyl)-5-[(5-phosphoribosylamino)methylideneamino] imidazole-4-carboxamide isomerase (245 aa).

Residue D8 is the Proton acceptor of the active site. D131 functions as the Proton donor in the catalytic mechanism.

The protein belongs to the HisA/HisF family.

It localises to the cytoplasm. The enzyme catalyses 1-(5-phospho-beta-D-ribosyl)-5-[(5-phospho-beta-D-ribosylamino)methylideneamino]imidazole-4-carboxamide = 5-[(5-phospho-1-deoxy-D-ribulos-1-ylimino)methylamino]-1-(5-phospho-beta-D-ribosyl)imidazole-4-carboxamide. It participates in amino-acid biosynthesis; L-histidine biosynthesis; L-histidine from 5-phospho-alpha-D-ribose 1-diphosphate: step 4/9. This is 1-(5-phosphoribosyl)-5-[(5-phosphoribosylamino)methylideneamino] imidazole-4-carboxamide isomerase from Neisseria gonorrhoeae (strain ATCC 700825 / FA 1090).